Consider the following 213-residue polypeptide: Endoplasmic reticulum vesicle protein 25 (213 aa).

Positions 1-20 are cleaved as a signal peptide; that stretch reads MILRIPSLLYLFTLLTAVYA. Topologically, residues 21–181 are lumenal; the sequence is VKFDLTSDRN…TNESTNQRVK (161 aa). The 90-residue stretch at 33–122 folds into the GOLD domain; sequence PSIIWNFASA…VRSVELDVDI (90 aa). A helical transmembrane segment spans residues 182-202; the sequence is VFSVLIICCTIGLGVWQLLHL. Residues 203–213 are Cytoplasmic-facing; that stretch reads RSFFKRKYLID.

It belongs to the EMP24/GP25L family.

It is found in the endoplasmic reticulum membrane. The protein resides in the golgi apparatus membrane. Functionally, constituent of COPII-coated endoplasmic reticulum-derived transport vesicles. Required for efficient transport of a subset of secretory proteins to the Golgi. Facilitates retrograde transport from the Golgi to the endoplasmic reticulum. The polypeptide is Endoplasmic reticulum vesicle protein 25 (ERV25) (Cryptococcus neoformans var. neoformans serotype D (strain B-3501A) (Filobasidiella neoformans)).